We begin with the raw amino-acid sequence, 321 residues long: Phosphate acyltransferase (321 aa).

Belongs to the PlsX family. In terms of assembly, homodimer. Probably interacts with PlsY.

The protein resides in the cytoplasm. The enzyme catalyses a fatty acyl-[ACP] + phosphate = an acyl phosphate + holo-[ACP]. It participates in lipid metabolism; phospholipid metabolism. Catalyzes the reversible formation of acyl-phosphate (acyl-PO(4)) from acyl-[acyl-carrier-protein] (acyl-ACP). This enzyme utilizes acyl-ACP as fatty acyl donor, but not acyl-CoA. The chain is Phosphate acyltransferase from Chlamydia trachomatis serovar A (strain ATCC VR-571B / DSM 19440 / HAR-13).